Consider the following 769-residue polypeptide: Non-secreted LysM effector LysM17 (769 aa).

Residues 173 to 193 (LPPLATAIPLAVVWASLASVI) traverse the membrane as a helical segment. Residues Asn-305, Asn-368, Asn-423, and Asn-452 are each glycosylated (N-linked (GlcNAc...) asparagine). LysM domains lie at 498–543 (RTIQ…HVCC) and 562–610 (YSNL…KICL). 4 N-linked (GlcNAc...) asparagine glycosylation sites follow: Asn-631, Asn-671, Asn-706, and Asn-734.

Belongs to the secreted LysM effector family.

It localises to the membrane. Its function is as follows. Non-secreted LysM effector that might be involved in manipulation of host defenses for successful infection. The protein is Non-secreted LysM effector LysM17 of Penicillium expansum (Blue mold rot fungus).